The primary structure comprises 539 residues: Peptide chain release factor 3 (539 aa).

A tr-type G domain is found at 14-283 (EKRRNFAIIS…AFLEYALQPE (270 aa)). GTP is bound by residues 23–30 (SHPDAGKT), 91–95 (DTPGH), and 145–148 (NKLD).

This sequence belongs to the TRAFAC class translation factor GTPase superfamily. Classic translation factor GTPase family. PrfC subfamily.

The protein resides in the cytoplasm. Functionally, increases the formation of ribosomal termination complexes and stimulates activities of RF-1 and RF-2. It binds guanine nucleotides and has strong preference for UGA stop codons. It may interact directly with the ribosome. The stimulation of RF-1 and RF-2 is significantly reduced by GTP and GDP, but not by GMP. The protein is Peptide chain release factor 3 of Rippkaea orientalis (strain PCC 8801 / RF-1) (Cyanothece sp. (strain PCC 8801)).